We begin with the raw amino-acid sequence, 299 residues long: Trans-aconitate 3-methyltransferase (299 aa).

N-acetylserine is present on S2.

This sequence belongs to the methyltransferase superfamily. Tam family.

The protein resides in the cytoplasm. It catalyses the reaction trans-aconitate + S-adenosyl-L-methionine = (E)-2-(methoxycarbonylmethyl)but-2-enedioate + S-adenosyl-L-homocysteine. In terms of biological role, catalyzes the S-adenosylmethionine monomethyl esterification of trans-aconitate and 3-isopropylmalate at high affinity and of other molecules like cis-aconitate, isocitrate, and citrate at lower velocities and affinities. The function of trans-aconitate methylation appears to be in reducing the toxicity of this spontaneous breakdown product of cis-aconitate. The role of 3-isopropylmalate methylation is unclear but may represent a metabolic branch at 3-isopropylmalate, where some of the material is taken in the pathway leading to leucine and some is taken in a pathway to the 3-isopropylmalate methyl ester, a molecule that provides a signal to switch from vegetative to invasive growth in response to amino acid starvation. This Saccharomyces cerevisiae (strain YJM789) (Baker's yeast) protein is Trans-aconitate 3-methyltransferase (TMT1).